The chain runs to 601 residues: Elongation factor 4 (601 aa).

The region spanning 2 to 184 (DLIRNFSIIA…EMIARVPPPT (183 aa)) is the tr-type G domain. GTP-binding positions include 14 to 19 (DHGKST) and 131 to 134 (NKID).

Belongs to the TRAFAC class translation factor GTPase superfamily. Classic translation factor GTPase family. LepA subfamily.

Its subcellular location is the cell inner membrane. The enzyme catalyses GTP + H2O = GDP + phosphate + H(+). Functionally, required for accurate and efficient protein synthesis under certain stress conditions. May act as a fidelity factor of the translation reaction, by catalyzing a one-codon backward translocation of tRNAs on improperly translocated ribosomes. Back-translocation proceeds from a post-translocation (POST) complex to a pre-translocation (PRE) complex, thus giving elongation factor G a second chance to translocate the tRNAs correctly. Binds to ribosomes in a GTP-dependent manner. The protein is Elongation factor 4 of Polynucleobacter asymbioticus (strain DSM 18221 / CIP 109841 / QLW-P1DMWA-1) (Polynucleobacter necessarius subsp. asymbioticus).